Consider the following 162-residue polypeptide: Small ribosomal subunit protein uS7m (162 aa).

It belongs to the universal ribosomal protein uS7 family. Part of the small ribosomal subunit.

The protein resides in the mitochondrion. One of the primary rRNA binding proteins, it binds directly to 16S-like rRNA where it nucleates assembly of the head domain of the small subunit. In Dictyostelium discoideum (Social amoeba), this protein is Small ribosomal subunit protein uS7m (mrps7).